We begin with the raw amino-acid sequence, 454 residues long: uncharacterized protein (454 aa).

Residues 1–45 (MAAEGKAIAKVNDLVIFVPYVVPGDVVDLQIKRKKNKYAEAEAVK) enclose the TRAM domain. Residues cysteine 58, cysteine 64, cysteine 67, and cysteine 160 each coordinate [4Fe-4S] cluster. 4 residues coordinate S-adenosyl-L-methionine: glutamine 286, tyrosine 315, glutamate 336, and aspartate 385. Residue cysteine 412 is the Nucleophile of the active site.

The protein belongs to the class I-like SAM-binding methyltransferase superfamily. RNA M5U methyltransferase family.

This is an uncharacterized protein from Bacteroides thetaiotaomicron (strain ATCC 29148 / DSM 2079 / JCM 5827 / CCUG 10774 / NCTC 10582 / VPI-5482 / E50).